A 199-amino-acid polypeptide reads, in one-letter code: Dephospho-CoA kinase (199 aa).

The region spanning 4 to 199 (VIGLTGGIAS…DNVLQKWNIS (196 aa)) is the DPCK domain. 12–17 (ASGKST) contacts ATP.

It belongs to the CoaE family.

Its subcellular location is the cytoplasm. It catalyses the reaction 3'-dephospho-CoA + ATP = ADP + CoA + H(+). It participates in cofactor biosynthesis; coenzyme A biosynthesis; CoA from (R)-pantothenate: step 5/5. Functionally, catalyzes the phosphorylation of the 3'-hydroxyl group of dephosphocoenzyme A to form coenzyme A. This chain is Dephospho-CoA kinase, found in Oceanobacillus iheyensis (strain DSM 14371 / CIP 107618 / JCM 11309 / KCTC 3954 / HTE831).